A 148-amino-acid chain; its full sequence is Endothelial differentiation-related factor 1 (148 aa).

An N-acetylalanine modification is found at alanine 2. Phosphoserine is present on serine 4. Lysine 25 bears the N6-methyllysine mark. Positions 34 to 67 are disordered; the sequence is RGEDVETSKKWAAGQNKQHSITKNTAKLDRETEE. The interaction with NR5A2, PPARG and NR1H3 stretch occupies residues 37 to 113; the sequence is DVETSKKWAA…QVIADYESGR (77 aa). Polar residues predominate over residues 48–58; sequence QNKQHSITKNT. Positions 69 to 108 are interaction with TBP and NR5A1; that stretch reads HHDRVTLEVGKVIQRGRQSKGLTQKDLATKINEKPQVIAD. An IQ motif motif is present at residues 81–88; that stretch reads IQRGRQSK. In terms of domain architecture, HTH cro/C1-type spans 81-135; sequence IQRGRQSKGLTQKDLATKINEKPQVIADYESGRAIPNNQVLGKIERAIGLKLRGK. Residues 92 to 111 constitute a DNA-binding region (H-T-H motif); sequence QKDLATKINEKPQVIADYES.

As to quaternary structure, interacts with TBP and the transcription factor IID (TFIID) complex, NR5A2, NR1H3 and PPARG. Interaction with TBP is regulated by phosphorylation. Binds NR5A1, ATF1, FOS and JUN via their conserved basic region. Binding to calmodulin is regulated by calcium and phosphorylation of the IQ motif. In terms of processing, phosphorylated. In terms of tissue distribution, expressed in brain, liver, kidney and heart (at protein level). Also expressed in testis.

It localises to the cytoplasm. It is found in the nucleus. In terms of biological role, transcriptional coactivator stimulating NR5A1 and ligand-dependent NR1H3/LXRA and PPARG transcriptional activities. Enhances the DNA-binding activity of ATF1, ATF2, CREB1 and NR5A1. Regulates nitric oxid synthase activity probably by sequestering calmodulin in the cytoplasm. Might function in endothelial cells differentiation, hormone-induced cardiomyocytes hypertrophy and lipid metabolism. The polypeptide is Endothelial differentiation-related factor 1 (Edf1) (Mus musculus (Mouse)).